Here is a 232-residue protein sequence, read N- to C-terminus: Expansin-YoaJ (232 aa).

A signal peptide spans 1-25 (MKKIMSAFVGMVLLTIFCFSPQASA). Residues 58-127 (ITAINPADLN…MKDGKINIKW (70 aa)) form the Expansin-like EG45 domain.

It localises to the secreted. The protein localises to the cell wall. Functionally, may promote colonization of plant roots. May cause loosening and extension of plant cell walls by disrupting non-covalent bonding between cellulose microfibrils and matrix glucans. Has very low expansin activity (in vitro). No enzymatic activity has been found. Binds to peptidoglycan and to plant cell walls. This chain is Expansin-YoaJ (yoaJ), found in Bacillus subtilis (strain 168).